The primary structure comprises 302 residues: 33 kDa chaperonin (302 aa).

2 disulfides stabilise this stretch: Cys-240/Cys-242 and Cys-273/Cys-276.

It belongs to the HSP33 family. Post-translationally, under oxidizing conditions two disulfide bonds are formed involving the reactive cysteines. Under reducing conditions zinc is bound to the reactive cysteines and the protein is inactive.

It localises to the cytoplasm. In terms of biological role, redox regulated molecular chaperone. Protects both thermally unfolding and oxidatively damaged proteins from irreversible aggregation. Plays an important role in the bacterial defense system toward oxidative stress. The sequence is that of 33 kDa chaperonin from Synechocystis sp. (strain ATCC 27184 / PCC 6803 / Kazusa).